Consider the following 496-residue polypeptide: Probable cytosol aminopeptidase (496 aa).

Residues K262 and D267 each coordinate Mn(2+). The active site involves K274. Mn(2+) contacts are provided by D285, D344, and E346. The active site involves R348.

This sequence belongs to the peptidase M17 family. Mn(2+) serves as cofactor.

It is found in the cytoplasm. It catalyses the reaction Release of an N-terminal amino acid, Xaa-|-Yaa-, in which Xaa is preferably Leu, but may be other amino acids including Pro although not Arg or Lys, and Yaa may be Pro. Amino acid amides and methyl esters are also readily hydrolyzed, but rates on arylamides are exceedingly low.. It carries out the reaction Release of an N-terminal amino acid, preferentially leucine, but not glutamic or aspartic acids.. Its function is as follows. Presumably involved in the processing and regular turnover of intracellular proteins. Catalyzes the removal of unsubstituted N-terminal amino acids from various peptides. This chain is Probable cytosol aminopeptidase, found in Rhizobium johnstonii (strain DSM 114642 / LMG 32736 / 3841) (Rhizobium leguminosarum bv. viciae).